The primary structure comprises 182 residues: MINSMQFLYLVASYLFGNILTAYIVTKWRHDVDIRNEGSGNPGARNMGRVYGKGYFIVTFLGDAIKGAIVVSIAEYLFGDSTFVMLALLAVLLGHIYPIVFKGKGGKGISTFIGGLIAFDYLIALTLVAVFIIFYLIFKGFTKPGLITIACLPVCMILYSYSIVTTILSALIIVLILYVNRD.

Helical transmembrane passes span 5 to 25, 54 to 74, 81 to 101, 117 to 137, and 157 to 177; these read MQFL…AYIV, GYFI…VSIA, STFV…PIVF, IAFD…FYLI, and ILYS…VLIL.

This sequence belongs to the PlsY family. As to quaternary structure, probably interacts with PlsX.

The protein localises to the cell membrane. The enzyme catalyses an acyl phosphate + sn-glycerol 3-phosphate = a 1-acyl-sn-glycero-3-phosphate + phosphate. It participates in lipid metabolism; phospholipid metabolism. Its function is as follows. Catalyzes the transfer of an acyl group from acyl-phosphate (acyl-PO(4)) to glycerol-3-phosphate (G3P) to form lysophosphatidic acid (LPA). This enzyme utilizes acyl-phosphate as fatty acyl donor, but not acyl-CoA or acyl-ACP. In Bacillus cereus (strain ATCC 10987 / NRS 248), this protein is Glycerol-3-phosphate acyltransferase 1.